The primary structure comprises 830 residues: DNA gyrase subunit A (830 aa).

One can recognise a Topo IIA-type catalytic domain in the interval 33-497; it reads LPDVRDGLKP…AENDIDIEDL (465 aa). The active-site O-(5'-phospho-DNA)-tyrosine intermediate is the Y121. The GyrA-box motif lies at 524–530; the sequence is QKRGGRG. The segment at 805–830 is disordered; it reads KDDSEQLEDSEEVSEVHDAEENNSEE.

Belongs to the type II topoisomerase GyrA/ParC subunit family. In terms of assembly, heterotetramer, composed of two GyrA and two GyrB chains. In the heterotetramer, GyrA contains the active site tyrosine that forms a transient covalent intermediate with DNA, while GyrB binds cofactors and catalyzes ATP hydrolysis.

It is found in the cytoplasm. It carries out the reaction ATP-dependent breakage, passage and rejoining of double-stranded DNA.. Its function is as follows. A type II topoisomerase that negatively supercoils closed circular double-stranded (ds) DNA in an ATP-dependent manner to modulate DNA topology and maintain chromosomes in an underwound state. Negative supercoiling favors strand separation, and DNA replication, transcription, recombination and repair, all of which involve strand separation. Also able to catalyze the interconversion of other topological isomers of dsDNA rings, including catenanes and knotted rings. Type II topoisomerases break and join 2 DNA strands simultaneously in an ATP-dependent manner. This Clostridium acetobutylicum (strain ATCC 824 / DSM 792 / JCM 1419 / IAM 19013 / LMG 5710 / NBRC 13948 / NRRL B-527 / VKM B-1787 / 2291 / W) protein is DNA gyrase subunit A.